A 60-amino-acid polypeptide reads, in one-letter code: Small, acid-soluble spore protein C2 (60 aa).

This sequence belongs to the alpha/beta-type SASP family. Post-translationally, SASP are degraded in the first minutes of spore germination and provide amino acids for both new protein synthesis and metabolism.

Functionally, SASP are bound to spore DNA. They are double-stranded DNA-binding proteins that cause DNA to change to an a-like conformation. They protect the DNA backbone from chemical and enzymatic cleavage and are thus involved in dormant spore's high resistance to UV light. The chain is Small, acid-soluble spore protein C2 (sspC2) from Clostridium perfringens (strain 13 / Type A).